A 76-amino-acid polypeptide reads, in one-letter code: Immune protein Tsi5 (76 aa).

The next 2 membrane-spanning stretches (helical) occupy residues 19-39 and 43-63; these read LLMTLVCIPLALLYVCLEWFF and WVTVGVFFGVLVVLRLGLYLY.

It is found in the membrane. Immunity protein that plays a role in preventing early activation of toxin Tse5. The protein is Immune protein Tsi5 of Pseudomonas aeruginosa (strain ATCC 15692 / DSM 22644 / CIP 104116 / JCM 14847 / LMG 12228 / 1C / PRS 101 / PAO1).